The following is a 202-amino-acid chain: Imidazoleglycerol-phosphate dehydratase (202 aa).

The protein belongs to the imidazoleglycerol-phosphate dehydratase family.

The protein localises to the cytoplasm. It carries out the reaction D-erythro-1-(imidazol-4-yl)glycerol 3-phosphate = 3-(imidazol-4-yl)-2-oxopropyl phosphate + H2O. The protein operates within amino-acid biosynthesis; L-histidine biosynthesis; L-histidine from 5-phospho-alpha-D-ribose 1-diphosphate: step 6/9. The chain is Imidazoleglycerol-phosphate dehydratase from Rhizobium etli (strain ATCC 51251 / DSM 11541 / JCM 21823 / NBRC 15573 / CFN 42).